The following is a 90-amino-acid chain: Small ribosomal subunit protein bS20 (90 aa).

The segment covering 1-11 (MAHHKSAKKRI) has biased composition (basic residues). Residues 1–22 (MAHHKSAKKRIRQTERRTEVNR) are disordered. Residues 12 to 22 (RQTERRTEVNR) show a composition bias toward basic and acidic residues.

It belongs to the bacterial ribosomal protein bS20 family.

In terms of biological role, binds directly to 16S ribosomal RNA. The protein is Small ribosomal subunit protein bS20 of Paramagnetospirillum magneticum (strain ATCC 700264 / AMB-1) (Magnetospirillum magneticum).